We begin with the raw amino-acid sequence, 274 residues long: 2,3,4,5-tetrahydropyridine-2,6-dicarboxylate N-succinyltransferase (274 aa).

Substrate is bound by residues Arg104 and Asp141.

It belongs to the transferase hexapeptide repeat family. Homotrimer.

The protein resides in the cytoplasm. It carries out the reaction (S)-2,3,4,5-tetrahydrodipicolinate + succinyl-CoA + H2O = (S)-2-succinylamino-6-oxoheptanedioate + CoA. It functions in the pathway amino-acid biosynthesis; L-lysine biosynthesis via DAP pathway; LL-2,6-diaminopimelate from (S)-tetrahydrodipicolinate (succinylase route): step 1/3. This Shewanella pealeana (strain ATCC 700345 / ANG-SQ1) protein is 2,3,4,5-tetrahydropyridine-2,6-dicarboxylate N-succinyltransferase.